The chain runs to 230 residues: Orotidine 5'-phosphate decarboxylase (230 aa).

Substrate contacts are provided by residues Asp11, Lys34, Asp61–Thr70, Thr117, Arg179, Gln188, Gly208, and Arg209. Lys63 serves as the catalytic Proton donor.

It belongs to the OMP decarboxylase family. Type 1 subfamily. Homodimer.

It carries out the reaction orotidine 5'-phosphate + H(+) = UMP + CO2. It participates in pyrimidine metabolism; UMP biosynthesis via de novo pathway; UMP from orotate: step 2/2. Functionally, catalyzes the decarboxylation of orotidine 5'-monophosphate (OMP) to uridine 5'-monophosphate (UMP). This chain is Orotidine 5'-phosphate decarboxylase, found in Streptococcus pyogenes serotype M28 (strain MGAS6180).